The primary structure comprises 364 residues: Probable dual-specificity RNA methyltransferase RlmN (364 aa).

The active-site Proton acceptor is glutamate 107. The Radical SAM core domain occupies 113-346 (HEYGNSVCVT…ATIRREQGSD (234 aa)). Cysteine 120 and cysteine 351 are joined by a disulfide. Residues cysteine 127, cysteine 131, and cysteine 134 each contribute to the [4Fe-4S] cluster site. Residues 177–178 (GE), serine 209, 232–234 (SLH), and asparagine 308 contribute to the S-adenosyl-L-methionine site. Residue cysteine 351 is the S-methylcysteine intermediate of the active site.

This sequence belongs to the radical SAM superfamily. RlmN family. Requires [4Fe-4S] cluster as cofactor.

The protein resides in the cytoplasm. The enzyme catalyses adenosine(2503) in 23S rRNA + 2 reduced [2Fe-2S]-[ferredoxin] + 2 S-adenosyl-L-methionine = 2-methyladenosine(2503) in 23S rRNA + 5'-deoxyadenosine + L-methionine + 2 oxidized [2Fe-2S]-[ferredoxin] + S-adenosyl-L-homocysteine. The catalysed reaction is adenosine(37) in tRNA + 2 reduced [2Fe-2S]-[ferredoxin] + 2 S-adenosyl-L-methionine = 2-methyladenosine(37) in tRNA + 5'-deoxyadenosine + L-methionine + 2 oxidized [2Fe-2S]-[ferredoxin] + S-adenosyl-L-homocysteine. In terms of biological role, specifically methylates position 2 of adenine 2503 in 23S rRNA and position 2 of adenine 37 in tRNAs. Confers resistance to some classes of antibiotics. In Staphylococcus epidermidis (strain ATCC 35984 / DSM 28319 / BCRC 17069 / CCUG 31568 / BM 3577 / RP62A), this protein is Probable dual-specificity RNA methyltransferase RlmN.